The chain runs to 138 residues: Fluoride-specific ion channel FluC (138 aa).

4 consecutive transmembrane segments (helical) span residues 34–54 (FMPK…GACA), 60–80 (MQFG…SFLM), 88–108 (FWGT…VVLV), and 112–132 (LPHA…AWLM). Na(+)-binding residues include Gly-95 and Thr-98.

It belongs to the fluoride channel Fluc/FEX (TC 1.A.43) family.

Its subcellular location is the cell membrane. The catalysed reaction is fluoride(in) = fluoride(out). With respect to regulation, na(+) is not transported, but it plays an essential structural role and its presence is essential for fluoride channel function. In terms of biological role, fluoride-specific ion channel. Important for reducing fluoride concentration in the cell, thus reducing its toxicity. This is Fluoride-specific ion channel FluC from Corynebacterium efficiens (strain DSM 44549 / YS-314 / AJ 12310 / JCM 11189 / NBRC 100395).